The sequence spans 20 residues: Haemoporin (20 aa).

The interval alanine 1–phenylalanine 20 is disordered.

In terms of assembly, homopentamer. Forms a cylindrical structure with a central pore. As to expression, detected in the hemolymph.

The protein resides in the secreted. This Aplysia californica (California sea hare) protein is Haemoporin.